A 224-amino-acid chain; its full sequence is UPF0441 protein PC1_0312 (224 aa).

The interval 178-224 (PKTALAPKPATTSTITRGGFGETVAKQNSMQRSSASSSSSSSRSMGG) is disordered. A compositionally biased stretch (low complexity) spans 209–224 (RSSASSSSSSSRSMGG).

Belongs to the UPF0441 family.

This chain is UPF0441 protein PC1_0312, found in Pectobacterium carotovorum subsp. carotovorum (strain PC1).